We begin with the raw amino-acid sequence, 429 residues long: Malate dehydrogenase [NADP] 1, chloroplastic (429 aa).

The transit peptide at 1 to 40 (MGLSTAYSPVGSHLAPAPLGHRRSAQLHRPRRALLATVRC) directs the protein to the chloroplast. A disulfide bridge links C64 with C69. Position 93–99 (93–99 (GAAGMIS)) interacts with NADP(+). Substrate is bound by residues R174 and R180. Residues N187, Q194, and 211–213 (VGN) contribute to the NADP(+) site. Substrate-binding residues include N213 and R244. H269 acts as the Proton acceptor in catalysis. Residues C405 and C417 are joined by a disulfide bond.

The protein belongs to the LDH/MDH superfamily. MDH type 2 family. Homodimer.

The protein localises to the plastid. It is found in the chloroplast. It carries out the reaction (S)-malate + NADP(+) = oxaloacetate + NADPH + H(+). Its activity is regulated as follows. Chloroplast NADP-MDH is activated upon illumination. In order to be enzymatically active, disulfide bridges on the protein must be reduced by thioredoxin which receives electrons from ferredoxin and the electron transport system of photosynthesis. Functionally, the chloroplastic, NADP-dependent form is essential for the photosynthesis C4 cycle, which allows plants to circumvent the problem of photorespiration. In C4 plants, NADP-MDH activity acts to convert oxaloacetate to malate in chloroplasts of mesophyll cells for transport to the bundle sheath cells. The sequence is that of Malate dehydrogenase [NADP] 1, chloroplastic from Sorghum bicolor (Sorghum).